The following is a 283-amino-acid chain: Elongation factor Ts (283 aa).

The segment at 80–83 (TDFV) is involved in Mg(2+) ion dislocation from EF-Tu.

The protein belongs to the EF-Ts family.

The protein resides in the cytoplasm. In terms of biological role, associates with the EF-Tu.GDP complex and induces the exchange of GDP to GTP. It remains bound to the aminoacyl-tRNA.EF-Tu.GTP complex up to the GTP hydrolysis stage on the ribosome. The sequence is that of Elongation factor Ts from Klebsiella pneumoniae (strain 342).